A 151-amino-acid polypeptide reads, in one-letter code: Lipoprotein signal peptidase (151 aa).

Helical transmembrane passes span 33–53, 58–78, and 87–107; these read VIPDFFHLTYVLNPGAAFGLL, WIFIPAAIIVCAGIIYAQFKI, and LTLGLIGGGALGNLYDRLFIG. Catalysis depends on residues D111 and D126. The chain crosses the membrane as a helical span at residues 120 to 140; it reads FVFNFADSAIVVGVGLLMILM.

It belongs to the peptidase A8 family.

It is found in the cell membrane. It catalyses the reaction Release of signal peptides from bacterial membrane prolipoproteins. Hydrolyzes -Xaa-Yaa-Zaa-|-(S,diacylglyceryl)Cys-, in which Xaa is hydrophobic (preferably Leu), and Yaa (Ala or Ser) and Zaa (Gly or Ala) have small, neutral side chains.. Its pathway is protein modification; lipoprotein biosynthesis (signal peptide cleavage). This protein specifically catalyzes the removal of signal peptides from prolipoproteins. The polypeptide is Lipoprotein signal peptidase (Desulfitobacterium hafniense (strain DSM 10664 / DCB-2)).